Reading from the N-terminus, the 314-residue chain is MTKKVVFLDRESLDATVREFNFPHEYKEYESTWTPEEIVERLQGAEIAMINKVPMRADTLKQLPDLKLIAVAATGTDVVDKAAAKAQGITVVNIRNYAFNTVPEHVVGLMFALRRAIVPYANSVRRGDWNKSKQFCYFDYPIYDIAGSTLGIIGYGALGKSIAKRAEALGMKVLAFDVFPQDGLVDLETILTQSDVITLHVPLTPDTKNMIGAEQLKKMKRSAILINTARGGLVDEAALLQALKDGTIGGAGFDVVAQEPPKDGNILCDADLPNLIVTPHVAWASKEAMQILADQLVDNVEAFVAGKPQNVVEA.

Residues T74, 157–158 (AL), 228–230 (TAR), and D254 contribute to the NAD(+) site. The active site involves R230. Residue E259 is part of the active site. The active-site Proton donor is the H280. 280–283 (HVAW) contributes to the NAD(+) binding site.

Belongs to the D-isomer specific 2-hydroxyacid dehydrogenase family. As to quaternary structure, homodimer.

The protein resides in the cytoplasm. It carries out the reaction (R)-glycerate + NAD(+) = 3-hydroxypyruvate + NADH + H(+). The protein operates within one-carbon metabolism; formaldehyde assimilation via serine pathway. In terms of biological role, plays a central role in assimilation of carbon. It converts hydroxypyruvate to glycerate as a key step in the serine cycle, and may also play an important role in C2 reactions, by interconverting glyoxylate and glycolate. The chain is Glycerate dehydrogenase (hprA) from Methylorubrum extorquens (strain ATCC 14718 / DSM 1338 / JCM 2805 / NCIMB 9133 / AM1) (Methylobacterium extorquens).